Consider the following 371-residue polypeptide: Queuine tRNA-ribosyltransferase (371 aa).

Aspartate 90 acts as the Proton acceptor in catalysis. Substrate-binding positions include 90–94 (DSGGF), aspartate 144, glutamine 188, and glycine 215. The segment at 246 to 252 (GVGTPED) is RNA binding. The active-site Nucleophile is aspartate 265. The segment at 270 to 274 (TRNAR) is RNA binding; important for wobble base 34 recognition. Zn(2+)-binding residues include cysteine 303, cysteine 305, cysteine 308, and histidine 334.

It belongs to the queuine tRNA-ribosyltransferase family. In terms of assembly, homodimer. Within each dimer, one monomer is responsible for RNA recognition and catalysis, while the other monomer binds to the replacement base PreQ1. It depends on Zn(2+) as a cofactor.

The catalysed reaction is 7-aminomethyl-7-carbaguanine + guanosine(34) in tRNA = 7-aminomethyl-7-carbaguanosine(34) in tRNA + guanine. Its pathway is tRNA modification; tRNA-queuosine biosynthesis. Catalyzes the base-exchange of a guanine (G) residue with the queuine precursor 7-aminomethyl-7-deazaguanine (PreQ1) at position 34 (anticodon wobble position) in tRNAs with GU(N) anticodons (tRNA-Asp, -Asn, -His and -Tyr). Catalysis occurs through a double-displacement mechanism. The nucleophile active site attacks the C1' of nucleotide 34 to detach the guanine base from the RNA, forming a covalent enzyme-RNA intermediate. The proton acceptor active site deprotonates the incoming PreQ1, allowing a nucleophilic attack on the C1' of the ribose to form the product. After dissociation, two additional enzymatic reactions on the tRNA convert PreQ1 to queuine (Q), resulting in the hypermodified nucleoside queuosine (7-(((4,5-cis-dihydroxy-2-cyclopenten-1-yl)amino)methyl)-7-deazaguanosine). This Neisseria gonorrhoeae (strain NCCP11945) protein is Queuine tRNA-ribosyltransferase.